We begin with the raw amino-acid sequence, 530 residues long: Bifunctional purine biosynthesis protein PurH (530 aa).

Residues 1–148 enclose the MGS-like domain; that stretch reads MENSRPIKRA…KNHKDVGIVV (148 aa).

This sequence belongs to the PurH family.

It catalyses the reaction (6R)-10-formyltetrahydrofolate + 5-amino-1-(5-phospho-beta-D-ribosyl)imidazole-4-carboxamide = 5-formamido-1-(5-phospho-D-ribosyl)imidazole-4-carboxamide + (6S)-5,6,7,8-tetrahydrofolate. It carries out the reaction IMP + H2O = 5-formamido-1-(5-phospho-D-ribosyl)imidazole-4-carboxamide. Its pathway is purine metabolism; IMP biosynthesis via de novo pathway; 5-formamido-1-(5-phospho-D-ribosyl)imidazole-4-carboxamide from 5-amino-1-(5-phospho-D-ribosyl)imidazole-4-carboxamide (10-formyl THF route): step 1/1. The protein operates within purine metabolism; IMP biosynthesis via de novo pathway; IMP from 5-formamido-1-(5-phospho-D-ribosyl)imidazole-4-carboxamide: step 1/1. This is Bifunctional purine biosynthesis protein PurH from Psychromonas ingrahamii (strain DSM 17664 / CCUG 51855 / 37).